We begin with the raw amino-acid sequence, 488 residues long: WD repeat-containing protein slp1 (488 aa).

Disordered stretches follow at residues 1-29 (MEIAGNSSTISPTFSTPTKKRNLVFPNSP) and 74-93 (CGSPRNKSRPASRSDRFIPS). Residues 7 to 17 (SSTISPTFSTP) show a composition bias toward low complexity. 7 WD repeats span residues 178–215 (IDDYYLNLLDWSNLNVVAVALERNVYVWNADSGSVSAL), 219–258 (DESTYVASVKWSHDGSFLSVGLGNGLVDIYDVESQTKLRT), 261–298 (GHQARVGCLSWNRHVLSSGSRSGAIHHHDVRIANHQIG), 302–341 (GHSSEVCGLAWRSDGLQLASGGNDNVVQIWDARSSIPKFT), 344–386 (NHNA…RVNT), 388–429 (DAGS…LTKQ), and 434–473 (AHDTRVLYSALSPDGRILSTAASDENLKFWRVYDGDHVKR).

It belongs to the WD repeat CDC20/Fizzy family. As to quaternary structure, interacts with cdc13, mad3 and mes1.

Required for mad2-dependent spindle checkpoint activation. Promotes ubiquitin-dependent degradation of cdc13 by the anaphase promoting complex/cyclosome (APC/C). The protein is WD repeat-containing protein slp1 (slp1) of Schizosaccharomyces pombe (strain 972 / ATCC 24843) (Fission yeast).